The sequence spans 437 residues: Phenylacetate-coenzyme A ligase (437 aa).

Belongs to the phenylacetyl-CoA ligase family. In terms of assembly, monomer.

The enzyme catalyses 2-phenylacetate + ATP + CoA = phenylacetyl-CoA + AMP + diphosphate. Its pathway is aromatic compound metabolism; phenylacetate degradation. Catalyzes the activation of phenylacetic acid (PA) to phenylacetyl-CoA (PA-CoA). This Escherichia coli (strain K12) protein is Phenylacetate-coenzyme A ligase (paaK).